Reading from the N-terminus, the 366-residue chain is Galactoside alpha-(1,2)-fucosyltransferase 1 (366 aa).

Residues 1 to 8 (MWPLSHRH) lie on the Cytoplasmic side of the membrane. Residues 9 to 25 (LCLAFLLVCVLSAISFF) form a helical; Signal-anchor for type II membrane protein membrane-spanning segment. Residues 26-366 (LHVHQDSFRH…LSPLWTLAEP (341 aa)) are Lumenal-facing. Residues Asn-66, Asn-302, and Asn-328 are each glycosylated (N-linked (GlcNAc...) asparagine).

Belongs to the glycosyltransferase 11 family.

It localises to the golgi apparatus. The protein localises to the golgi stack membrane. It catalyses the reaction a beta-D-galactosyl-(1-&gt;4)-N-acetyl-beta-D-glucosaminyl derivative + GDP-beta-L-fucose = an alpha-L-Fuc-(1-&gt;2)-beta-D-Gal-(1-&gt;4)-beta-D-GlcNAc derivative + GDP + H(+). The enzyme catalyses a ganglioside GA1 + GDP-beta-L-fucose = a ganglioside Fuc-GA1 + GDP + H(+). It carries out the reaction a beta-D-Gal-(1-&gt;3)-beta-D-GlcNAc-(1-&gt;3)-beta-D-Gal-(1-&gt;4)-beta-D-Glc-(1&lt;-&gt;1')-Cer(d18:1(4E)) + GDP-beta-L-fucose = alpha-L-fucosyl-(1-&gt;2)- beta-D-galactosyl-(1-&gt;3)-N-acetyl-beta-D-glucosaminyl-(1-&gt;3)-beta-D-galactosyl-(1-&gt;4)-beta-D-glucosyl-(1&lt;-&gt;1')-N-acylsphing-4-enine + GDP + H(+). The catalysed reaction is a neolactoside nLc4Cer(d18:1(4E)) + GDP-beta-L-fucose = a neolactoside IV(2)-alpha-Fuc-nLc4Cer(d18:1(4E)) + GDP + H(+). It catalyses the reaction a ganglioside GM1 + GDP-beta-L-fucose = a ganglioside Fuc-GM1 + GDP + H(+). The enzyme catalyses beta-D-galactosyl-(1-&gt;3)-N-acetyl-D-galactosamine + GDP-beta-L-fucose = alpha-L-fucosyl-(1-&gt;2)-beta-D-galactosyl-(1-&gt;3)-N-acetyl-D-galactosamine + GDP + H(+). The protein operates within protein modification; protein glycosylation. Catalyzes the transfer of L-fucose, from a guanosine diphosphate-beta-L-fucose, to the terminal galactose residue of glycoconjugates through an alpha(1,2) linkage leading to H antigen synthesis that is an intermediate substrate in the synthesis of ABO blood group antigens. H antigen is essential for maturation of the glomerular layer of the main olfactory bulb, in cell migration and early cell-cell contacts during tumor associated angiogenesis. Preferentially fucosylates soluble lactose and to a lesser extent fucosylates glycolipids gangliosides GA1 and GM1a. The sequence is that of Galactoside alpha-(1,2)-fucosyltransferase 1 from Alouatta belzebul (Red-handed howler monkey).